The chain runs to 224 residues: Small ribosomal subunit protein uS3 (224 aa).

Residues L38–R106 enclose the KH type-2 domain.

It belongs to the universal ribosomal protein uS3 family. As to quaternary structure, part of the 30S ribosomal subunit. Forms a tight complex with proteins S10 and S14.

Functionally, binds the lower part of the 30S subunit head. Binds mRNA in the 70S ribosome, positioning it for translation. This chain is Small ribosomal subunit protein uS3, found in Anaeromyxobacter dehalogenans (strain 2CP-C).